A 104-amino-acid polypeptide reads, in one-letter code: Cell division topological specificity factor (104 aa).

Belongs to the MinE family.

Its function is as follows. Prevents the cell division inhibition by proteins MinC and MinD at internal division sites while permitting inhibition at polar sites. This ensures cell division at the proper site by restricting the formation of a division septum at the midpoint of the long axis of the cell. In Sorangium cellulosum (strain So ce56) (Polyangium cellulosum (strain So ce56)), this protein is Cell division topological specificity factor.